The following is a 219-amino-acid chain: Ribose-5-phosphate isomerase A (219 aa).

Substrate contacts are provided by residues 28–31 (TGST), 81–84 (DGAD), and 94–97 (KGGG). Glu103 acts as the Proton acceptor in catalysis. Lys121 serves as a coordination point for substrate.

Belongs to the ribose 5-phosphate isomerase family. As to quaternary structure, homodimer.

It carries out the reaction aldehydo-D-ribose 5-phosphate = D-ribulose 5-phosphate. Its pathway is carbohydrate degradation; pentose phosphate pathway; D-ribose 5-phosphate from D-ribulose 5-phosphate (non-oxidative stage): step 1/1. Its function is as follows. Catalyzes the reversible conversion of ribose-5-phosphate to ribulose 5-phosphate. This chain is Ribose-5-phosphate isomerase A, found in Shewanella pealeana (strain ATCC 700345 / ANG-SQ1).